Consider the following 281-residue polypeptide: 3-hydroxyanthranilate 3,4-dioxygenase (281 aa).

Residues 1–162 form a domain A (catalytic) region; the sequence is MSGVTAIEIP…SNEFKTGKPG (162 aa). Position 45 (R45) interacts with O2. 3 residues coordinate Fe cation: H49, E55, and H93. E55 is a substrate binding site. 2 residues coordinate substrate: R97 and E107. The segment at 163–179 is linker; the sequence is KGTFACNAPYEARWTDL. A domain B region spans residues 180–281; the sequence is PVPINRKEFI…GFAITIRMPA (102 aa).

This sequence belongs to the 3-HAO family. Fe(2+) is required as a cofactor.

It is found in the cytoplasm. It carries out the reaction 3-hydroxyanthranilate + O2 = (2Z,4Z)-2-amino-3-carboxymuconate 6-semialdehyde. Its pathway is cofactor biosynthesis; NAD(+) biosynthesis; quinolinate from L-kynurenine: step 3/3. Its function is as follows. Catalyzes the oxidative ring opening of 3-hydroxyanthranilate to 2-amino-3-carboxymuconate semialdehyde, which spontaneously cyclizes to quinolinate. The protein is 3-hydroxyanthranilate 3,4-dioxygenase (haao-1) of Caenorhabditis elegans.